The primary structure comprises 336 residues: Structure-specific endonuclease subunit SLX1 (336 aa).

The GIY-YIG domain maps to 21–104; that stretch reads SFYGVYLLQS…QHCHETRHIK (84 aa). The tract at residues 37–57 is disordered; it reads FYIGSTPDPPRRLRQHNGDLK. The segment at 214 to 290 adopts an SLX1-type zinc-finger fold; it reads CALCLEPIEQ…PATVNRCCSC (77 aa).

The protein belongs to the SLX1 family. As to quaternary structure, forms a heterodimer with SLX4. The cofactor is a divalent metal cation.

It localises to the nucleus. Catalytic subunit of the SLX1-SLX4 structure-specific endonuclease that resolves DNA secondary structures generated during DNA repair and recombination. Has endonuclease activity towards branched DNA substrates, introducing single-strand cuts in duplex DNA close to junctions with ss-DNA. This is Structure-specific endonuclease subunit SLX1 from Scheffersomyces stipitis (strain ATCC 58785 / CBS 6054 / NBRC 10063 / NRRL Y-11545) (Yeast).